A 294-amino-acid chain; its full sequence is N-acetylmuramic acid 6-phosphate etherase (294 aa).

The SIS domain maps to 54-217 (VIQSFEEEGR…STASMIGVGK (164 aa)). Glu82 (proton donor) is an active-site residue. Glu113 is an active-site residue.

The protein belongs to the GCKR-like family. MurNAc-6-P etherase subfamily. As to quaternary structure, homodimer.

The catalysed reaction is N-acetyl-D-muramate 6-phosphate + H2O = N-acetyl-D-glucosamine 6-phosphate + (R)-lactate. It functions in the pathway amino-sugar metabolism; N-acetylmuramate degradation. Specifically catalyzes the cleavage of the D-lactyl ether substituent of MurNAc 6-phosphate, producing GlcNAc 6-phosphate and D-lactate. This chain is N-acetylmuramic acid 6-phosphate etherase, found in Bacillus anthracis (strain A0248).